The primary structure comprises 317 residues: Vacuolar arginine/histidine antiporter YPQ2 (317 aa).

Over 1-13 the chain is Vacuolar; it reads MSCSNGIWPTVSN. The region spanning 8 to 71 is the PQ-loop 1 domain; that stretch reads WPTVSNLCGS…AKLTGQLLFQ (64 aa). Residues 14–34 traverse the membrane as a helical segment; sequence LCGSLSFFTSVISLFPQIIET. Over 35–39 the chain is Cytoplasmic; it reads YRDKS. The chain crosses the membrane as a helical span at residues 40–62; the sequence is VDGLSPYFLLAWLCGDITSLIGA. The Vacuolar portion of the chain corresponds to 63-71; sequence KLTGQLLFQ. A helical transmembrane segment spans residues 72 to 94; sequence ILLAIYFLLNDSFVCGQYYYYGV. At 95-143 the chain is on the cytoplasmic side; it reads LHENKLATVGHEPKPLLPELVENGELLREEEDMIQGGSSAESPRSSRRR. Phosphoserine is present on Ser-136. A helical transmembrane segment spans residues 144–164; the sequence is SAITAALAIAHTISTASAYPL. Residues 165-184 are Vacuolar-facing; it reads NVGSTQSQVGPPGDGKNSQL. The chain crosses the membrane as a helical span at residues 185-205; sequence GTILSWIGASFYVGARIPQLI. The PQ-loop 2 domain occupies 185–247; sequence GTILSWIGAS…SCRFLDNQNK (63 aa). The Cytoplasmic portion of the chain corresponds to 206-215; it reads KNYNRKSTDG. A helical membrane pass occupies residues 216 to 236; that stretch reads LSPFLFATTLLCNITYNLSIF. Over 237–249 the chain is Vacuolar; it reads TSCRFLDNQNKRE. The helical transmembrane segment at 250–270 threads the bilayer; it reads FIVNELPFIFGSAGTIAFDLI. The Cytoplasmic portion of the chain corresponds to 271-317; that stretch reads YFYQYYILYATDMQLRELERELYSPEEDSAAQLVTERTSLLSGETQT.

It belongs to the laat-1 family.

The protein resides in the vacuole membrane. It carries out the reaction L-histidine(out) + L-arginine(in) = L-histidine(in) + L-arginine(out). Functionally, amino acid transporter that moves arginine across the vacuolar membrane. Active during nitrogen starvation when it exports stored vacuolar arginine to the cytosol, for use as a nitrogen source. Has been shown to function as an arginine/histidine antiporter when substrate is present on both sides of the membrane, but may also function as a uniporter. The polypeptide is Vacuolar arginine/histidine antiporter YPQ2 (YPQ2) (Saccharomyces cerevisiae (strain ATCC 204508 / S288c) (Baker's yeast)).